The chain runs to 136 residues: Nucleoside diphosphate kinase (136 aa).

ATP is bound by residues lysine 10, phenylalanine 58, arginine 86, threonine 92, arginine 104, and asparagine 114. Histidine 117 functions as the Pros-phosphohistidine intermediate in the catalytic mechanism.

The protein belongs to the NDK family. In terms of assembly, homotetramer. Mg(2+) is required as a cofactor.

The protein resides in the cytoplasm. The enzyme catalyses a 2'-deoxyribonucleoside 5'-diphosphate + ATP = a 2'-deoxyribonucleoside 5'-triphosphate + ADP. It carries out the reaction a ribonucleoside 5'-diphosphate + ATP = a ribonucleoside 5'-triphosphate + ADP. Major role in the synthesis of nucleoside triphosphates other than ATP. The ATP gamma phosphate is transferred to the NDP beta phosphate via a ping-pong mechanism, using a phosphorylated active-site intermediate. This chain is Nucleoside diphosphate kinase, found in Mycobacteroides abscessus (strain ATCC 19977 / DSM 44196 / CCUG 20993 / CIP 104536 / JCM 13569 / NCTC 13031 / TMC 1543 / L948) (Mycobacterium abscessus).